Consider the following 312-residue polypeptide: Olfactory receptor 1J21 (312 aa).

The next 7 helical transmembrane spans lie at 29 to 49, 58 to 78, 95 to 115, 143 to 163, 197 to 217, 241 to 261, and 272 to 292; these read ALFL…ILLI, PMYF…SVTA, AGCV…NFLL, LLVM…TLLF, LVIL…ILVS, CGSH…LYFF, and VIVA…IYSL.

It belongs to the G-protein coupled receptor 1 family.

It is found in the cell membrane. Its function is as follows. Odorant receptor. Activated by (+) and (-)-carvone. This is Olfactory receptor 1J21 from Mus musculus (Mouse).